The chain runs to 413 residues: Elongation factor 1-alpha (413 aa).

GTP contacts are provided by residues 1–7 (HVDSGKS), 77–81 (DAPGH), and 139–142 (NKMD). The tr-type G domain occupies 1 to 228 (HVDSGKSTTT…DAILPPARPT (228 aa)). 2 positions are modified to 5-glutamyl glycerylphosphorylethanolamine: Glu287 and Glu360.

It belongs to the TRAFAC class translation factor GTPase superfamily. Classic translation factor GTPase family. EF-Tu/EF-1A subfamily.

The protein resides in the cytoplasm. In terms of biological role, this protein promotes the GTP-dependent binding of aminoacyl-tRNA to the A-site of ribosomes during protein biosynthesis. In Heliocheilus albipunctella (Millet head miner), this protein is Elongation factor 1-alpha.